An 89-amino-acid polypeptide reads, in one-letter code: Small ribosomal subunit protein bS20 (89 aa).

This sequence belongs to the bacterial ribosomal protein bS20 family.

Binds directly to 16S ribosomal RNA. This chain is Small ribosomal subunit protein bS20, found in Helicobacter pylori (strain Shi470).